Consider the following 309-residue polypeptide: MPAEGGKTDMERIGLFSEMEYITVGDKYVSQFNRPFNEAASKNKQMLPGGSKEMSDLQAGYFDPHFVRIFEGEGYINLNQVRRRDMVEAAKKNLGKAFLPSNGEKKPCGLGSYYGTIGGPVPFFSAQSKPREKYKAPGKNLYTNPGKKGTGYGYANITIGKQFSHSADFYDAAKLKYKKANEEHHRLLKGAPFKLNLHPRDYFDANPYFSEESLPPIKKEEKKKTISNTFKPSSPGKKPGGMKAGTFDPYPSHSADPYVAKLANISGKDDKIFHPPSGPKSRPVESIMTLNVRRALNSKNYKTSSVPSY.

The segment at 220-249 is disordered; sequence EEKKKTISNTFKPSSPGKKPGGMKAGTFDP.

The protein belongs to the CFAP96 family. As to expression, detected in testis and fetal liver.

The protein localises to the cytoplasm. Its subcellular location is the cytoskeleton. It is found in the microtubule organizing center. The protein resides in the centrosome. The sequence is that of Cilia-and flagella-associated protein 96 from Homo sapiens (Human).